A 445-amino-acid polypeptide reads, in one-letter code: Ribosomal protein uS12 methylthiotransferase RimO (445 aa).

The MTTase N-terminal domain occupies 10-120 (PKVGFVSLGC…VVNAVHEVVP (111 aa)). [4Fe-4S] cluster contacts are provided by C19, C55, C84, C153, C157, and C160. The 240-residue stretch at 139–378 (LTPRHYAYLK…AHQQAISSAR (240 aa)) folds into the Radical SAM core domain. The region spanning 380-445 (QLRIGREIEV…DEYDLWAEQI (66 aa)) is the TRAM domain.

This sequence belongs to the methylthiotransferase family. RimO subfamily. Requires [4Fe-4S] cluster as cofactor.

Its subcellular location is the cytoplasm. The catalysed reaction is L-aspartate(89)-[ribosomal protein uS12]-hydrogen + (sulfur carrier)-SH + AH2 + 2 S-adenosyl-L-methionine = 3-methylsulfanyl-L-aspartate(89)-[ribosomal protein uS12]-hydrogen + (sulfur carrier)-H + 5'-deoxyadenosine + L-methionine + A + S-adenosyl-L-homocysteine + 2 H(+). Its function is as follows. Catalyzes the methylthiolation of an aspartic acid residue of ribosomal protein uS12. This Pseudomonas fluorescens (strain Pf0-1) protein is Ribosomal protein uS12 methylthiotransferase RimO.